We begin with the raw amino-acid sequence, 160 residues long: Ureidoglycolate lyase (160 aa).

Belongs to the ureidoglycolate lyase family. As to quaternary structure, homodimer. It depends on Ni(2+) as a cofactor.

It carries out the reaction (S)-ureidoglycolate = urea + glyoxylate. It functions in the pathway nitrogen metabolism; (S)-allantoin degradation. Functionally, catalyzes the catabolism of the allantoin degradation intermediate (S)-ureidoglycolate, generating urea and glyoxylate. Involved in the anaerobic utilization of allantoin as sole nitrogen source. Reinforces the induction of genes involved in the degradation of allantoin and glyoxylate by producing glyoxylate. This chain is Ureidoglycolate lyase, found in Escherichia coli O6:H1 (strain CFT073 / ATCC 700928 / UPEC).